The sequence spans 131 residues: MKLVVDASAIAALYVPEERSEQAERAVSQAQELHTLDLAAYEVANDLWKHARRGLLREDEASNMLEELWEFFKALKVHSYAEVLKDAFALALKHGVTVYDAAYVALAEKIGGKLLTLDRQLAEKFPALVTP.

The 118-residue stretch at 4 to 121 folds into the PINc domain; sequence VVDASAIAAL…GKLLTLDRQL (118 aa). Residues Asp6, Asp100, and Asp118 each coordinate Mg(2+).

The protein belongs to the PINc/VapC protein family. In terms of assembly, homodimer. Forms a complex with putative antitoxin VapB3, possibly VapB(2)-VapC(2). The cofactor is Mg(2+).

With respect to regulation, inhibited by EDTA. In terms of biological role, toxic component of a type II toxin-antitoxin (TA) system. Has ribonuclease activity. In Pyrobaculum aerophilum (strain ATCC 51768 / DSM 7523 / JCM 9630 / CIP 104966 / NBRC 100827 / IM2), this protein is Ribonuclease VapC3.